A 654-amino-acid chain; its full sequence is Fructose-1,6-bisphosphatase class 3 (654 aa).

Residues 288 to 307 form a disordered region; sequence NPAFKPKKRPDKHERLTQRE. Residues 298–307 are compositionally biased toward basic and acidic residues; that stretch reads DKHERLTQRE.

Belongs to the FBPase class 3 family. Requires Mn(2+) as cofactor.

It catalyses the reaction beta-D-fructose 1,6-bisphosphate + H2O = beta-D-fructose 6-phosphate + phosphate. It participates in carbohydrate biosynthesis; gluconeogenesis. The chain is Fructose-1,6-bisphosphatase class 3 from Staphylococcus aureus (strain MSSA476).